Here is a 391-residue protein sequence, read N- to C-terminus: Phosphoprotein (391 aa).

The segment at 1 to 194 (MDQFIKQDET…GSLSGATLYA (194 aa)) is N-terminus domain. A phosphothreonine mark is found at T10, T16, T91, T150, and T165. Phosphoserine is present on S188. A multimerization region spans residues 216-279 (ISANEIMDLL…MATVKIMDPG (64 aa)). Residues 218 to 245 (ANEIMDLLRGMDARLQHLEQKVDKVLAQ) are a coiled coil. Phosphothreonine is present on T250. Residue S257 is modified to Phosphoserine. A phosphothreonine mark is found at T258 and T282. 2 positions are modified to phosphoserine: S292 and S294. T298 is modified (phosphothreonine). Phosphoserine occurs at positions 301 and 374. An interaction with the nucleoprotein region spans residues 343 to 391 (AGQKVMITKMITDCVANPQMKQAFEQRLAKASTEDALNDIKRDIIRSAI). A Phosphothreonine modification is found at T375.

The protein belongs to the rubulavirus/avulavirus P protein family. Homotetramer. Interacts (via multimerization domain) with polymerase L; this interaction forms the polymerase L-P complex. Interacts (via N-terminus) with N0 (via Ncore); this interaction allows P to chaperon N0 to avoid N polymerization before encapsidation. Interacts (via C-terminus) with N-RNA template; this interaction positions the polymerase on the template for both transcription and replication. Interacts with host RPS6KB1 kinase; this interaction may play a role in the viral replication and transcription.

The protein resides in the virion. Essential cofactor of the RNA polymerase L that plays a central role in the transcription and replication by forming the polymerase complex with RNA polymerase L and recruiting L to the genomic N-RNA template for RNA synthesis. Also plays a central role in the encapsidation of nascent RNA chains by forming the encapsidation complex with the nucleocapsid protein N (N-P complex). Acts as a chaperone for newly synthesized free N protein, so-called N0, allowing encapsidation of nascent RNA chains during replication. The nucleoprotein protein N prevents excessive phosphorylation of P, which leads to down-regulation of viral transcription/ replication. Participates, together with N, in the formation of viral factories (viroplasms), which are large inclusions in the host cytoplasm where replication takes place. This chain is Phosphoprotein, found in Homo sapiens (Human).